Consider the following 51-residue polypeptide: MFRIEGLAPKLDPEEMKRKMREDVISSIRNFLIYVALLRVTPFILKKLDSI.

Methionine 1 carries the post-translational modification N-acetylmethionine. Residue lysine 10 forms a Glycyl lysine isopeptide (Lys-Gly) (interchain with G-Cter in SUMO2) linkage. Residues 27 to 45 (SIRNFLIYVALLRVTPFIL) traverse the membrane as a helical segment.

The protein belongs to the Tom5 family. In terms of assembly, forms part of the preprotein translocase complex of the outer mitochondrial membrane (TOM complex) which consists of at least 7 different proteins (TOMM5, TOMM6, TOMM7, TOMM20, TOMM22, TOMM40 and TOMM70).

The protein resides in the mitochondrion outer membrane. In Bos taurus (Bovine), this protein is Mitochondrial import receptor subunit TOM5 homolog.